The sequence spans 274 residues: NAD kinase (274 aa).

Catalysis depends on D59, which acts as the Proton acceptor. Residues 59-60 (DG), K64, 128-129 (ND), D158, 169-174 (TAYALS), and A193 contribute to the NAD(+) site.

This sequence belongs to the NAD kinase family. It depends on a divalent metal cation as a cofactor.

It is found in the cytoplasm. It catalyses the reaction NAD(+) + ATP = ADP + NADP(+) + H(+). Functionally, involved in the regulation of the intracellular balance of NAD and NADP, and is a key enzyme in the biosynthesis of NADP. Catalyzes specifically the phosphorylation on 2'-hydroxyl of the adenosine moiety of NAD to yield NADP. The chain is NAD kinase from Petrotoga mobilis (strain DSM 10674 / SJ95).